The primary structure comprises 213 residues: Glycerol-3-phosphate acyltransferase (213 aa).

The next 6 membrane-spanning stretches (helical) occupy residues 2–22 (ITIV…GLWI), 52–74 (AGMA…PIIF), 81–100 (PLIF…FAGF), 112–132 (VIFG…FGAL), 143–163 (VTAS…GFIL), and 164–184 (SNYD…IIIR).

Belongs to the PlsY family. As to quaternary structure, probably interacts with PlsX.

It is found in the cell membrane. The enzyme catalyses an acyl phosphate + sn-glycerol 3-phosphate = a 1-acyl-sn-glycero-3-phosphate + phosphate. It participates in lipid metabolism; phospholipid metabolism. Its function is as follows. Catalyzes the transfer of an acyl group from acyl-phosphate (acyl-PO(4)) to glycerol-3-phosphate (G3P) to form lysophosphatidic acid (LPA). This enzyme utilizes acyl-phosphate as fatty acyl donor, but not acyl-CoA or acyl-ACP. In Streptococcus pneumoniae (strain Hungary19A-6), this protein is Glycerol-3-phosphate acyltransferase.